A 350-amino-acid polypeptide reads, in one-letter code: Phenylalanine--tRNA ligase alpha subunit (350 aa).

Residue E259 coordinates Mg(2+).

Belongs to the class-II aminoacyl-tRNA synthetase family. Phe-tRNA synthetase alpha subunit type 1 subfamily. As to quaternary structure, tetramer of two alpha and two beta subunits. Mg(2+) is required as a cofactor.

Its subcellular location is the cytoplasm. The enzyme catalyses tRNA(Phe) + L-phenylalanine + ATP = L-phenylalanyl-tRNA(Phe) + AMP + diphosphate + H(+). In Rickettsia typhi (strain ATCC VR-144 / Wilmington), this protein is Phenylalanine--tRNA ligase alpha subunit.